Consider the following 479-residue polypeptide: Glycerol-3-phosphate acyltransferase RAM2 (479 aa).

The next 4 membrane-spanning stretches (helical) occupy residues 14 to 34 (YFAL…LVLA), 37 to 57 (LAGL…LIFA), 215 to 235 (SPLM…LACL), and 237 to 257 (IAAG…ALGV). Positions 284–289 (HRTLLD) match the HXXXXD motif motif. N-linked (GlcNAc...) asparagine glycosylation is present at N448.

The protein belongs to the GPAT/DAPAT family.

It localises to the membrane. It carries out the reaction sn-glycerol 3-phosphate + an acyl-CoA = a 1-acyl-sn-glycero-3-phosphate + CoA. Its pathway is lipid metabolism; glycerolipid metabolism. Its function is as follows. Involved in the production of cutin monomers. Esterifies acyl-group from acyl-ACP to the sn-2 position of glycerol-3-phosphate, a step in cutin biosynthesis. Required for colonization of the root by mycorrhizal fungi, and appropriate hyphopodia and arbuscule formation. Cutin monomers act as plant signals that promote colonization by arbuscular mycorrhizal fungi. This signaling function has been recruited by pathogenic oomycetes to facilitate appressoria formation and their own invasion. In Petunia hybrida (Petunia), this protein is Glycerol-3-phosphate acyltransferase RAM2.